The sequence spans 305 residues: Nucleotide-binding protein Mpe_A3336 (305 aa).

22–29 (GISGSGKS) is an ATP binding site. Position 74–77 (74–77 (DVRS)) interacts with GTP.

It belongs to the RapZ-like family.

Functionally, displays ATPase and GTPase activities. This Methylibium petroleiphilum (strain ATCC BAA-1232 / LMG 22953 / PM1) protein is Nucleotide-binding protein Mpe_A3336.